We begin with the raw amino-acid sequence, 85 residues long: MAHKKGVGSSRNGRDSNPKMLGVKRFGGERVQPGTIIVRQRGTKIKPGNNVGLGRDYTIYSLIEGVVTFEQHSRNQKRVSVYATE.

The interval 1–26 (MAHKKGVGSSRNGRDSNPKMLGVKRF) is disordered.

This sequence belongs to the bacterial ribosomal protein bL27 family.

In Roseiflexus sp. (strain RS-1), this protein is Large ribosomal subunit protein bL27.